Reading from the N-terminus, the 426-residue chain is tRNA (guanine(37)-N(1))-methyltransferase (426 aa).

S-adenosyl-L-methionine is bound by residues histidine 203, 242–243 (DL), 269–270 (DA), and asparagine 292. Residues 374 to 426 (RISFKMPTLKKRKDTENNDDQENNNNSSNNNNNNKIDYNEAVSSGGEGKKIKH) form a disordered region. Residues 396 to 407 (NNNNSSNNNNNN) show a composition bias toward low complexity.

The protein belongs to the class I-like SAM-binding methyltransferase superfamily. TRM5/TYW2 family. As to quaternary structure, monomer.

The protein localises to the mitochondrion matrix. The protein resides in the nucleus. It localises to the cytoplasm. The enzyme catalyses guanosine(37) in tRNA + S-adenosyl-L-methionine = N(1)-methylguanosine(37) in tRNA + S-adenosyl-L-homocysteine + H(+). Specifically methylates the N1 position of guanosine-37 in various cytoplasmic and mitochondrial tRNAs. Methylation is not dependent on the nature of the nucleoside 5' of the target nucleoside. This is the first step in the biosynthesis of wybutosine (yW), a modified base adjacent to the anticodon of tRNAs and required for accurate decoding. The protein is tRNA (guanine(37)-N(1))-methyltransferase (trmt5) of Heterostelium pallidum (strain ATCC 26659 / Pp 5 / PN500) (Cellular slime mold).